A 177-amino-acid polypeptide reads, in one-letter code: MIKIRLSRGGTKKRPVYKVVIADSRRARDGRFIEKVGFFNPLLPKDKKERVGLEAERIKYWLGQGAQPTTRVARILGENGIIAMPANGSNPSKAIPKKERKKEGDEAAPAAAPKAEAAPAAEAPKEEAPKAEAAPAAEAPKEEAPKAEAAPAAEAPKEEAPKAEAAPAAEAPKEEAK.

The segment at 80–177 (GIIAMPANGS…AAEAPKEEAK (98 aa)) is disordered. Residues 107 to 122 (AAPAAAPKAEAAPAAE) show a composition bias toward low complexity.

This sequence belongs to the bacterial ribosomal protein bS16 family.

The chain is Small ribosomal subunit protein bS16 from Pelagibacter ubique (strain HTCC1062).